The following is a 646-amino-acid chain: Exoribonuclease 2 (646 aa).

In terms of domain architecture, RNB spans 191-518 (RIDLTALDFV…NHRLLKAIIQ (328 aa)). The S1 motif domain maps to 563–645 (DKTFSAEIVD…ETRNIVARPV (83 aa)).

This sequence belongs to the RNR ribonuclease family. RNase II subfamily.

It is found in the cytoplasm. The enzyme catalyses Exonucleolytic cleavage in the 3'- to 5'-direction to yield nucleoside 5'-phosphates.. Functionally, involved in mRNA degradation. Hydrolyzes single-stranded polyribonucleotides processively in the 3' to 5' direction. In Xenorhabdus bovienii (strain SS-2004) (Xenorhabdus nematophila subsp. bovienii), this protein is Exoribonuclease 2.